The chain runs to 127 residues: Fumarate reductase subunit C (127 aa).

Helical transmembrane passes span 30-50 (ATVLPLILFTLFLTVGLGSLV), 67-87 (LVIAINLVALAGSLFHAQTFF), and 107-127 (IIVLAQWAAVAFISLIVLIVV).

This sequence belongs to the FrdC family. As to quaternary structure, part of an enzyme complex containing four subunits: a flavoprotein (FrdA), an iron-sulfur protein (FrdB), and two hydrophobic anchor proteins (FrdC and FrdD).

Its subcellular location is the cell inner membrane. In terms of biological role, anchors the catalytic components of the fumarate reductase complex to the cell membrane, binds quinones. This Vibrio cholerae serotype O1 (strain ATCC 39541 / Classical Ogawa 395 / O395) protein is Fumarate reductase subunit C.